The chain runs to 163 residues: Olfactory marker protein (163 aa).

At Ala2 the chain carries N-acetylalanine.

It belongs to the olfactory marker protein family. Interacts with BEX1 and BEX2. Uniquely associated with mature olfactory receptor neurons.

The protein localises to the cytoplasm. In terms of biological role, may act as a modulator of the olfactory signal-transduction cascade. The chain is Olfactory marker protein (Omp) from Mus musculus (Mouse).